Reading from the N-terminus, the 155-residue chain is Transcriptional repressor NrdR (155 aa).

The segment at 3–34 (CPFCHAEETKVVDSRLVADGAQVRRRRECLEC) is a zinc-finger region. The 91-residue stretch at 49–139 (PLIIKRDGRR…VYKRFKDVSD (91 aa)) folds into the ATP-cone domain.

The protein belongs to the NrdR family. The cofactor is Zn(2+).

Its function is as follows. Negatively regulates transcription of bacterial ribonucleotide reductase nrd genes and operons by binding to NrdR-boxes. The polypeptide is Transcriptional repressor NrdR (Legionella pneumophila (strain Paris)).